Reading from the N-terminus, the 867-residue chain is uncharacterized protein (867 aa).

The 294-residue stretch at 1–294 (MKFSHSLQFN…GSSLRESYMK (294 aa)) folds into the SPX domain. 2 disordered regions span residues 105–152 (QGNN…GQTS) and 165–228 (ESTA…NNNR). Positions 138 to 152 (ITSSNREIYLNGQTS) are enriched in polar residues. The segment covering 198-223 (GNDDEVEEEDDDDDDEDEDEDEDEDN) has biased composition (acidic residues). 12 helical membrane-spanning segments follow: residues 406 to 426 (TIAT…FPVI), 434 to 454 (CLAL…PLFV), 485 to 505 (VIFS…FTIA), 537 to 557 (MFVA…VLCF), 576 to 596 (ILIV…PISS), 616 to 636 (FAVS…LLSF), 656 to 676 (FTGV…LWCL), 683 to 703 (VFGD…GTGL), 712 to 732 (FLWT…VVSS), 755 to 775 (VLLI…HIVA), 797 to 817 (LFVL…TSGF), and 842 to 862 (AGIP…TPIM).

This sequence belongs to the CitM (TC 2.A.11) transporter family.

Its subcellular location is the endoplasmic reticulum membrane. This is an uncharacterized protein from Schizosaccharomyces pombe (strain 972 / ATCC 24843) (Fission yeast).